A 536-amino-acid polypeptide reads, in one-letter code: Membrane protein insertase YidC (536 aa).

5 helical membrane passes run 7-27 (FFIFAFLFVSFLLWQAWQSQS), 338-358 (LLSTIHNFIGNWGFSIILITF), 419-439 (LPVFIQMPIFLSLYYMLIGSV), 453-473 (LSDQDPYYVLPIFMGLTMFFI), and 494-514 (PFIFTVFFLWFPSGLVLYYIV).

The protein belongs to the OXA1/ALB3/YidC family. Type 1 subfamily. Interacts with the Sec translocase complex via SecD. Specifically interacts with transmembrane segments of nascent integral membrane proteins during membrane integration.

The protein resides in the cell membrane. Required for the insertion and/or proper folding and/or complex formation of integral membrane proteins into the membrane. Involved in integration of membrane proteins that insert both dependently and independently of the Sec translocase complex, as well as at least some lipoproteins. Aids folding of multispanning membrane proteins. In Buchnera aphidicola subsp. Schizaphis graminum (strain Sg), this protein is Membrane protein insertase YidC.